A 299-amino-acid polypeptide reads, in one-letter code: Ribosomal RNA small subunit methyltransferase H (299 aa).

S-adenosyl-L-methionine-binding positions include 45 to 47 (GGH), Asp64, Phe92, Asp108, and Gln115. A disordered region spans residues 275 to 299 (PQSDEQAKNPRSRSAKLRLAQRKEQ). A compositionally biased stretch (basic residues) spans 284-299 (PRSRSAKLRLAQRKEQ).

This sequence belongs to the methyltransferase superfamily. RsmH family.

It localises to the cytoplasm. The enzyme catalyses cytidine(1402) in 16S rRNA + S-adenosyl-L-methionine = N(4)-methylcytidine(1402) in 16S rRNA + S-adenosyl-L-homocysteine + H(+). In terms of biological role, specifically methylates the N4 position of cytidine in position 1402 (C1402) of 16S rRNA. This Gloeothece citriformis (strain PCC 7424) (Cyanothece sp. (strain PCC 7424)) protein is Ribosomal RNA small subunit methyltransferase H.